The following is a 2094-amino-acid chain: Non-reducing polyketide synthase ustP (2094 aa).

Residues 9–243 (VFGDLSVPYH…GKIQVGGLFH (235 aa)) form an N-terminal acylcarrier protein transacylase (SAT) domain region. The interval 357–377 (NTAGVDSSSRGSGHADAEKQP) is disordered. The Ketosynthase family 3 (KS3) domain occupies 379–813 (RSKIAIIGFS…GGNSSVLVED (435 aa)). Catalysis depends on for beta-ketoacyl synthase activity residues Cys-551, His-686, and His-727. Positions 914-1227 (FSFTGQGSQY…EDDCKIFTPA (314 aa)) are malonyl-CoA:ACP transacylase (MAT) domain. Ser-1004 serves as the catalytic For acyl/malonyl transferase activity. Positions 1305 to 1629 (TTSVQYITAE…QRKVLDLVLP (325 aa)) are product template (PT) domain. An N-terminal hotdog fold region spans residues 1308 to 1445 (VQYITAESYG…CSGFFTDKSR (138 aa)). In terms of domain architecture, PKS/mFAS DH spans 1308-1625 (VQYITAESYG…FAAVQRKVLD (318 aa)). His-1341 (proton acceptor; for dehydratase activity) is an active-site residue. The C-terminal hotdog fold stretch occupies residues 1473–1625 (GSVHMIKTGM…FAAVQRKVLD (153 aa)). The active-site Proton donor; for dehydratase activity is the Asp-1536. The segment covering 1644 to 1671 (AAAAPSQRQQQQQQQQQQQPAQPVAASQ) has biased composition (low complexity). Positions 1644–1689 (AAAAPSQRQQQQQQQQQQQPAQPVAASQESGMDDMPPTLVPSEKKD) are disordered. A Carrier domain is found at 1689–1763 (DVPSEKLKVI…ELVRHILGSS (75 aa)). O-(pantetheine 4'-phosphoryl)serine is present on Ser-1723. Residues 1762 to 1778 (SSTPSSDSGPATPSITP) are compositionally biased toward polar residues. The disordered stretch occupies residues 1762-1782 (SSTPSSDSGPATPSITPLQEP). The interval 1844 to 2069 (KVWLFPDGSG…GVVEGAHHFS (226 aa)) is claisen cyclase domain. The For Claisen cyclase activity role is filled by Ser-1916.

It carries out the reaction 6 malonyl-CoA + acetyl-CoA + 6 H(+) = naphtopyrone YWA1 + 6 CO2 + 7 CoA + H2O. It functions in the pathway secondary metabolite biosynthesis. Its function is as follows. Non-reducing polyketide synthase; part of the gene cluster that mediates the biosynthesis of ustilaginoidins, dimeric gamma-naphthopyrones isolated from different fungal species. The first step in the biosynthesis of ustilaginoidins is the production of gamma-naphthopyrone precursor YWA1 by the non-reducing polyketide synthase ustP, via condensation of one acetyl-CoA starter unit with 6 malonyl-CoA units. YWA1 is then probably substrate of the ustZ to yield norrubrofusarin via a dehydration reaction. A key enzyme in the biosynthetic pathway is the laccase ustL, which catalyzes the oxidative dimerization of norrubrofusarin to ustilaginoidin A. It can produce the M- and P-atropisomers in varying amounts, depending on the reaction conditions. For the biosynthesis of 3-methylustilaginoid in derivatives such as chaetochromin A, a methylated derivative of YWA1 is required. The C-methylation is considered to be catalyzed by ustM, the phosphopantetheine attachment site of which indicates that it acts on the growing polyketide chain before release of the product. For the biosynthesis of chaetochromin A, it is assumed that saturation of the D2 double bond takes place before dimerization, and is probably catalyzed by an external reductase because no candidate gene was identified within the cluster. This is Non-reducing polyketide synthase ustP from Ustilaginoidea virens (Rice false smut fungus).